The following is a 258-amino-acid chain: Methylthioribulose-1-phosphate dehydratase (258 aa).

Polar residues predominate over residues 1–20 (MTPPSNGQAAETNDHLVQSD). A disordered region spans residues 1–21 (MTPPSNGQAAETNDHLVQSDN). Residue C105 participates in substrate binding. 2 residues coordinate Zn(2+): H123 and H125. Residue E153 is the Proton donor/acceptor of the active site. H210 is a Zn(2+) binding site.

This sequence belongs to the aldolase class II family. MtnB subfamily. Zn(2+) is required as a cofactor.

The protein resides in the cytoplasm. It catalyses the reaction 5-(methylsulfanyl)-D-ribulose 1-phosphate = 5-methylsulfanyl-2,3-dioxopentyl phosphate + H2O. The protein operates within amino-acid biosynthesis; L-methionine biosynthesis via salvage pathway; L-methionine from S-methyl-5-thio-alpha-D-ribose 1-phosphate: step 2/6. Functionally, catalyzes the dehydration of methylthioribulose-1-phosphate (MTRu-1-P) into 2,3-diketo-5-methylthiopentyl-1-phosphate (DK-MTP-1-P). The chain is Methylthioribulose-1-phosphate dehydratase from Chaetomium globosum (strain ATCC 6205 / CBS 148.51 / DSM 1962 / NBRC 6347 / NRRL 1970) (Soil fungus).